Consider the following 317-residue polypeptide: tRNA-cytidine(32) 2-sulfurtransferase (317 aa).

Positions 46 to 51 (SGGKDS) match the PP-loop motif motif. Cys-121, Cys-124, and Cys-212 together coordinate [4Fe-4S] cluster.

The protein belongs to the TtcA family. In terms of assembly, homodimer. Requires Mg(2+) as cofactor. [4Fe-4S] cluster is required as a cofactor.

The protein resides in the cytoplasm. It catalyses the reaction cytidine(32) in tRNA + S-sulfanyl-L-cysteinyl-[cysteine desulfurase] + AH2 + ATP = 2-thiocytidine(32) in tRNA + L-cysteinyl-[cysteine desulfurase] + A + AMP + diphosphate + H(+). It functions in the pathway tRNA modification. In terms of biological role, catalyzes the ATP-dependent 2-thiolation of cytidine in position 32 of tRNA, to form 2-thiocytidine (s(2)C32). The sulfur atoms are provided by the cysteine/cysteine desulfurase (IscS) system. The chain is tRNA-cytidine(32) 2-sulfurtransferase from Shewanella loihica (strain ATCC BAA-1088 / PV-4).